The following is a 209-amino-acid chain: High frequency lysogenization protein HflD homolog (209 aa).

It belongs to the HflD family.

The protein resides in the cytoplasm. The protein localises to the cell inner membrane. The sequence is that of High frequency lysogenization protein HflD homolog from Marinomonas sp. (strain MWYL1).